The primary structure comprises 369 residues: GTPase Obg (369 aa).

In terms of domain architecture, Obg spans 1-158 (MFTDVVELTV…RRIKLDLKLI (158 aa)). Positions 126–146 (NTHFKSSTNQRPTYAQPGEKG) are disordered. Over residues 128 to 138 (HFKSSTNQRPT) the composition is skewed to polar residues. Positions 159–362 (ADVGLVGFPN…LKHALFNLVQ (204 aa)) constitute an OBG-type G domain. GTP contacts are provided by residues 165-172 (GFPNVGKS), 190-194 (FTTLT), 212-215 (DIPG), 280-283 (TRAD), and 343-345 (SSA). The Mg(2+) site is built by Ser172 and Thr192.

This sequence belongs to the TRAFAC class OBG-HflX-like GTPase superfamily. OBG GTPase family. Monomer. Mg(2+) serves as cofactor.

The protein resides in the cytoplasm. In terms of biological role, an essential GTPase which binds GTP, GDP and possibly (p)ppGpp with moderate affinity, with high nucleotide exchange rates and a fairly low GTP hydrolysis rate. Plays a role in control of the cell cycle, stress response, ribosome biogenesis and in those bacteria that undergo differentiation, in morphogenesis control. The sequence is that of GTPase Obg from Sulfurimonas denitrificans (strain ATCC 33889 / DSM 1251) (Thiomicrospira denitrificans (strain ATCC 33889 / DSM 1251)).